Here is a 78-residue protein sequence, read N- to C-terminus: Beta-defensin 105A (78 aa).

The N-terminal stretch at 1–27 is a signal peptide; the sequence is MALIRKTFYFVFAVFFILVQQPSGCQA. 3 disulfide bridges follow: Cys43/Cys74, Cys53/Cys67, and Cys57/Cys73.

The protein belongs to the beta-defensin family.

It localises to the secreted. In terms of biological role, has antimicrobial activity. The sequence is that of Beta-defensin 105A (DEFB105A) from Macaca fascicularis (Crab-eating macaque).